A 319-amino-acid chain; its full sequence is MWKRSFHSQGGPLRARTKFTKPKPKQPVLPKDKIRPPTQLTHHSNNLRITEPIPPTTSNLRCPDDHPLWQFFSNKKFIRSADDLPPSSHIRPWSIPELRHKSFNDLHSLWYNCLREQNVLARENHLLKNIVGSTHDEFSELSNSIRTTMWQIRHVLNERELAYSASREFLQDESERKKFLDTLANDYFLNKDIPDDEVASMLTRFQLAIFGISETIQDNTVDINFIDGIKFLANLKLQRFKDSNDLISEISQEPITDVGESFILFTSDFEPHAVQEACVAIKDLRKSPDNKVPKLDELPTVRKYLKQLIHASSVEQATA.

The tract at residues 1 to 55 (MWKRSFHSQGGPLRARTKFTKPKPKQPVLPKDKIRPPTQLTHHSNNLRITEPIPP) is disordered. Basic residues predominate over residues 15-24 (ARTKFTKPKP). Residues 38 to 48 (TQLTHHSNNLR) are compositionally biased toward polar residues.

Belongs to the universal ribosomal protein uL29 family. As to quaternary structure, component of the mitochondrial large ribosomal subunit. Mature mitochondrial ribosomes consist of a small (37S) and a large (54S) subunit. The 37S subunit contains at least 33 different proteins and 1 molecule of RNA (15S). The 54S subunit contains at least 45 different proteins and 1 molecule of RNA (21S).

It localises to the mitochondrion. The chain is Large ribosomal subunit protein uL29m (MRPL4) from Saccharomyces cerevisiae (strain YJM789) (Baker's yeast).